A 642-amino-acid polypeptide reads, in one-letter code: Aryl hydrocarbon receptor nuclear translocator homolog (642 aa).

Positions 13–66 (ASRENHCEIERRRRNKMTAYITELSDMVPTCSALARKPDKLTILRMAVAHMKAL) constitute a bHLH domain. PAS domains follow at residues 85–156 (DQEL…ESQN) and 271–341 (TAAN…LKQK). The 44-residue stretch at 346–389 (SLLYRARAKNSEYVWLRTQAYAFLNPYTDEVEYIVCTNSSGKTM) folds into the PAC domain. Positions 450–612 (QAPTPQQQQQ…GPAGAGQPQG (163 aa)) are disordered. Composition is skewed to polar residues over residues 463–482 (RPGSAQTTPVGYTYDTTHSP) and 528–554 (YQYQQTSPARSPSGPTYTQLSAGNGNR). The segment covering 555 to 564 (QQAQPGAYQA) has biased composition (low complexity).

As to quaternary structure, efficient DNA binding requires dimerization with another bHLH protein. Heterodimer with ahr, trh or sim. At stage 11, expression is detected in tracheal pits. At later stages, strong expression is also detected in the CNS.

It is found in the nucleus. Its function is as follows. Heterodimers of tgo/trh are involved in the control of breathless expression. Plays a role in the cellular or tissue response to oxygen deprivation. The sequence is that of Aryl hydrocarbon receptor nuclear translocator homolog (tgo) from Drosophila melanogaster (Fruit fly).